The following is a 284-amino-acid chain: Tropomyosin alpha-1 chain (284 aa).

The disordered stretch occupies residues 1-38; that stretch reads MDAIKKKMQMLKLDKENALDRAEQAEADKKAAEERSKQ. Positions 1–284 form a coiled coil; sequence MDAIKKKMQM…DHALNDMTSI (284 aa). A compositionally biased stretch (basic and acidic residues) spans 12 to 38; sequence KLDKENALDRAEQAEADKKAAEERSKQ.

This sequence belongs to the tropomyosin family. In terms of assembly, homodimer. Heterodimer of an alpha (TPM1, TPM3 or TPM4) and a beta (TPM2) chain. Interacts with HRG (via the HRR domain); the interaction contributes to the antiangiogenic properties of the histidine/proline-rich region (HRR) of HRG.

The protein resides in the cytoplasm. The protein localises to the cytoskeleton. Its function is as follows. Binds to actin filaments in muscle and non-muscle cells. Plays a central role, in association with the troponin complex, in the calcium dependent regulation of vertebrate striated muscle contraction. Smooth muscle contraction is regulated by interaction with caldesmon. In non-muscle cells is implicated in stabilizing cytoskeleton actin filaments. The sequence is that of Tropomyosin alpha-1 chain (TPM1) from Coturnix japonica (Japanese quail).